The sequence spans 1458 residues: DNA polymerase alpha catalytic subunit (1458 aa).

Disordered regions lie at residues 1 to 25 (MSDSGSFAASRSRREKTEKSGRKEA) and 89 to 119 (DLEDNALADSGKGAKGAPKDKTNVKKSSVSK). The segment covering 15–25 (EKTEKSGRKEA) has biased composition (basic and acidic residues). 2 DNA-binding regions span residues 650 to 715 (RINS…VHQI) and 1241 to 1373 (QFRA…ACSK). Residues cysteine 1280, cysteine 1283, cysteine 1307, cysteine 1312, cysteine 1345, cysteine 1350, cysteine 1368, and cysteine 1371 each coordinate Zn(2+). The CysA-type zinc-finger motif lies at 1280 to 1310 (CPKCGTENIYDNVFDGSGLQIEPGLKRCSKP). A CysB motif motif is present at residues 1345-1371 (CEEKTCQNRTRRLPLSFSRNGPICQAC).

Belongs to the DNA polymerase type-B family. As to quaternary structure, the DNA polymerase alpha complex is composed of four subunits: the catalytic subunit POLA1, the regulatory subunit POLA2, and the small and the large primase subunits PRIM1 and PRIM2 respectively. Interacts with PARP1; this interaction functions as part of the control of replication fork progression. Interacts with MCM10 and WDHD1; these interactions recruit the polymerase alpha complex to the pre-replicative complex bound to DNA. Interacts with RPA1; this interaction stabilizes the replicative complex and reduces the misincorporation rate of DNA polymerase alpha by acting as a fidelity clamp.

It is found in the nucleus. It catalyses the reaction DNA(n) + a 2'-deoxyribonucleoside 5'-triphosphate = DNA(n+1) + diphosphate. Its function is as follows. Plays an essential role in the initiation of DNA replication. During the S phase of the cell cycle, the DNA polymerase alpha complex (composed of a catalytic subunit POLA1/p180, a regulatory subunit POLA2/p70 and two primase subunits PRIM1/p49 and PRIM2/p58) is recruited to DNA at the replicative forks via direct interactions with MCM10 and WDHD1. The primase subunit of the polymerase alpha complex initiates DNA synthesis by oligomerising short RNA primers on both leading and lagging strands. These primers are initially extended by the polymerase alpha catalytic subunit and subsequently transferred to polymerase delta and polymerase epsilon for processive synthesis on the lagging and leading strand, respectively. The reason this transfer occurs is because the polymerase alpha has limited processivity and lacks intrinsic 3' exonuclease activity for proofreading error, and therefore is not well suited for replicating long complexes. The chain is DNA polymerase alpha catalytic subunit (pola1) from Xenopus laevis (African clawed frog).